The primary structure comprises 509 residues: Ethanolamine-phosphate phospho-lyase (509 aa).

N6-(pyridoxal phosphate)lysine is present on lysine 279. A compositionally biased stretch (basic and acidic residues) spans 451–474 (EKTSAKRKVHNENSGDTNAKEKET). A disordered region spans residues 451–509 (EKTSAKRKVHNENSGDTNAKEKETCSSNSQERNPNDHAYRQSNGLHPESPTFTRKRIRT).

Belongs to the class-III pyridoxal-phosphate-dependent aminotransferase family. As to quaternary structure, homotetramer. Pyridoxal 5'-phosphate serves as cofactor.

It is found in the mitochondrion. It catalyses the reaction phosphoethanolamine + H2O = acetaldehyde + NH4(+) + phosphate. Catalyzes the pyridoxal-phosphate-dependent breakdown of phosphoethanolamine, converting it to ammonia, inorganic phosphate and acetaldehyde. The protein is Ethanolamine-phosphate phospho-lyase (etnppl) of Xenopus laevis (African clawed frog).